Reading from the N-terminus, the 347-residue chain is NADH-ubiquinone oxidoreductase chain 2 (347 aa).

11 helical membrane passes run 1 to 21, 25 to 45, 59 to 79, 96 to 116, 127 to 147, 149 to 169, 178 to 198, 200 to 220, 237 to 257, 276 to 296, and 325 to 345; these read MNPL…VIVM, HWLT…PMLM, YFLT…INLT, IIMT…FWVP, CLIL…MISP, INLN…GWGG, IMAY…AYNP, MTML…MLLI, IPLV…LPPL, IILP…YMRL, and LLSP…TMLL.

Belongs to the complex I subunit 2 family. In terms of assembly, core subunit of respiratory chain NADH dehydrogenase (Complex I) which is composed of 45 different subunits. Interacts with TMEM242.

It is found in the mitochondrion inner membrane. The catalysed reaction is a ubiquinone + NADH + 5 H(+)(in) = a ubiquinol + NAD(+) + 4 H(+)(out). Its function is as follows. Core subunit of the mitochondrial membrane respiratory chain NADH dehydrogenase (Complex I) which catalyzes electron transfer from NADH through the respiratory chain, using ubiquinone as an electron acceptor. Essential for the catalytic activity and assembly of complex I. The polypeptide is NADH-ubiquinone oxidoreductase chain 2 (Natalus tumidirostris (Trinidadian funnel-eared bat)).